The sequence spans 114 residues: UPF0339 protein plu2779 (114 aa).

Repeat copies occupy residues 11 to 59 (TKNK…NFEI) and 62 to 110 (NKSG…VRDL).

Belongs to the UPF0339 family. Duplicated subfamily.

This chain is UPF0339 protein plu2779, found in Photorhabdus laumondii subsp. laumondii (strain DSM 15139 / CIP 105565 / TT01) (Photorhabdus luminescens subsp. laumondii).